The chain runs to 95 residues: METGTEKRVSARITGRVQGVGFRNFTRRRARRLDVTGWVRNESDGSVRLEAEGPTDALESLIEAVHEGPRTARVETVDVDWSDAADAFEGFRVRR.

The Acylphosphatase-like domain occupies 8–95 (RVSARITGRV…DAFEGFRVRR (88 aa)). Active-site residues include Arg23 and Asn41.

Belongs to the acylphosphatase family.

It carries out the reaction an acyl phosphate + H2O = a carboxylate + phosphate + H(+). The sequence is that of Acylphosphatase (acyP) from Salinibacter ruber (strain DSM 13855 / M31).